A 725-amino-acid polypeptide reads, in one-letter code: Antigen peptide transporter 1 (725 aa).

Topologically, residues 1 to 8 (MAAHAWPT) are cytoplasmic. A helical transmembrane segment spans residues 9 to 29 (AALLLLLVDWLLLRPVLPGIF). Residues 30-38 (SLLVPEVPL) lie on the Lumenal side of the membrane. The chain crosses the membrane as a helical span at residues 39–60 (LRVWAVGLSRWAILGLGVRGVL). At 61–67 (GVTAGAR) the chain is on the cytoplasmic side. A helical transmembrane segment spans residues 68-88 (GWLAALQPLVAALGLALPGLA). At 89 to 110 (SFRKLSAWGALREGDNAGLLHW) the chain is on the lumenal side. The chain crosses the membrane as a helical span at residues 111–131 (NSRLDAFVLSYVAALPAAALW). The Cytoplasmic segment spans residues 132–163 (HKLGGFWAPSGHKGAGDMLCRMLGFLDSKKGR). Residues 164 to 184 (LHLVLVLLILSCLGEMAIPFF) form a helical membrane-spanning segment. The ABC transmembrane type-1 domain maps to 164–447 (LHLVLVLLIL…LLSIYPSMQK (284 aa)). The Lumenal segment spans residues 185 to 204 (TGRITDWILQDKTAPSFARN). A helical membrane pass occupies residues 205–225 (MWLMCILTIASTVLEFAGDGI). The Cytoplasmic portion of the chain corresponds to 226–275 (YNITMGHMHSRVHGEVFRAVLHQETGFFLKNPTGSITSRVTEDTSNVCES). A helical transmembrane segment spans residues 276–296 (ISDKLNLFLWYLGRGLCLLAF). The Lumenal portion of the chain corresponds to 297-305 (MIWGSFYLT). The helical transmembrane segment at 306 to 326 (VVTLLSLPLLFLLPRRLGKVY) threads the bilayer. Residues 327–395 (QSLAVKVQES…VTEVWTMSVS (69 aa)) are Cytoplasmic-facing. The interval 352 to 397 (PTVRSFANEEGEAQKFRQKLEEMKPLNKKEALAYVTEVWTMSVSGM) is part of the peptide-binding site. Residues 396–416 (GMLLKVGILYLGGQLVVRGAV) traverse the membrane as a helical segment. Residues 417 to 420 (SSGN) are Lumenal-facing. Residues 421 to 441 (LVSFVLYQLQFTRAVEVLLSI) traverse the membrane as a helical segment. The tract at residues 430–464 (QFTRAVEVLLSIYPSMQKSVGASEKIFEYLDRTPC) is part of the peptide-binding site. Over 442 to 725 (YPSMQKSVGA…MVEALAAPSD (284 aa)) the chain is Cytoplasmic. In terms of domain architecture, ABC transporter spans 480 to 719 (VKFQDVSFAY…GGCYRSMVEA (240 aa)). ATP-binding positions include 515–523 (GPNGSGKST), 618–624 (NQLSGGQ), and Gln-678. A Mg(2+)-binding site is contributed by Ser-522.

Belongs to the ABC transporter superfamily. ABCB family. MHC peptide exporter (TC 3.A.1.209) subfamily. Heterodimer of TAP1 and TAP2 (TAP1-TAP2). A component of the peptide loading complex (PLC), interacts via TAPBP with MHCI heterodimer; this interaction mediates peptide-MHCI assembly. Interacts with PSMB5 and PSMB8. The cofactor is Mg(2+).

It is found in the endoplasmic reticulum membrane. It carries out the reaction a peptide antigen(in) + ATP + H2O = a peptide antigen(out) + ADP + phosphate + H(+). Its function is as follows. ABC transporter associated with antigen processing. In complex with TAP2 mediates unidirectional translocation of peptide antigens from cytosol to endoplasmic reticulum (ER) for loading onto MHC class I (MHCI) molecules. Uses the chemical energy of ATP to export peptides against the concentration gradient. During the transport cycle alternates between 'inward-facing' state with peptide binding site facing the cytosol to 'outward-facing' state with peptide binding site facing the ER lumen. Peptide antigen binding to ATP-loaded TAP1-TAP2 induces a switch to hydrolysis-competent 'outward-facing' conformation ready for peptide loading onto nascent MHCI molecules. Subsequently ATP hydrolysis resets the transporter to the 'inward facing' state for a new cycle. As a component of the peptide loading complex (PLC), acts as a molecular scaffold essential for peptide-MHCI assembly and antigen presentation. The sequence is that of Antigen peptide transporter 1 (Tap1) from Rattus norvegicus (Rat).